A 621-amino-acid polypeptide reads, in one-letter code: TOX high mobility group box family member 4 (621 aa).

Disordered stretches follow at residues 153–227 (LGLS…QKPV) and 305–333 (LDPAPPSQTPSPPPMATVDPASPAPASIE). T176 bears the Phosphothreonine mark. A phosphoserine mark is found at S178, S181, and S182. Residues 183-193 (LHEDGVEDFRR) are compositionally biased toward basic and acidic residues. Positions 208 to 218 (KQKAPKKRKKK) are enriched in basic residues. The Nuclear localization signal signature appears at 213–218 (KKRKKK). A DNA-binding region (HMG box) is located at residues 223–291 (PQKPVSAYAL…EYLKALAAYK (69 aa)). Pro residues predominate over residues 307–319 (PAPPSQTPSPPPM). The residue at position 313 (T313) is a Phosphothreonine. The residue at position 315 (S315) is a Phosphoserine. Residues 320–333 (ATVDPASPAPASIE) are compositionally biased toward low complexity. The residue at position 481 (R481) is an Asymmetric dimethylarginine. Residues 510 to 529 (PTVESSPERPMNNSPEAHTV) are disordered. 6 positions are modified to phosphoserine: S533, S550, S552, S560, S562, and S567.

In terms of assembly, component of the PNUTS-PP1 phosphatase complex, composed of PPP1R10/PNUTS, TOX4, WDR82 and PPP1CA or PPP1CB or PPP1CC. Interacts with PPP1R10/PNUTS. Interacts with FOXO1 and CREB1 (increased by cAMP); FOXO1 and CREB1 are required for full induction of TOX4-dependent activity and the interactions are inhibited by insulin.

It is found in the nucleus. The protein localises to the chromosome. With respect to regulation, in liver, recruited to target gene promoters following treatment with dexamethasone and cAMP. Binding is decreased in presence of insulin. Its function is as follows. Transcription factor that modulates cell fate reprogramming from the somatic state to the pluripotent and neuronal fate. In liver, controls the expression of hormone-regulated gluconeogenic genes such as G6PC1 and PCK1. This regulation is independent of the insulin receptor activation. Also acts as a regulatory component of protein phosphatase 1 (PP1) complexes. Component of the PNUTS-PP1 protein phosphatase complex, a PP1 complex that regulates RNA polymerase II transcription pause-release. PNUTS-PP1 also plays a role in the control of chromatin structure and cell cycle progression during the transition from mitosis into interphase. This Pongo abelii (Sumatran orangutan) protein is TOX high mobility group box family member 4 (TOX4).